A 358-amino-acid polypeptide reads, in one-letter code: UDP-N-acetylglucosamine--N-acetylmuramyl-(pentapeptide) pyrophosphoryl-undecaprenol N-acetylglucosamine transferase (358 aa).

UDP-N-acetyl-alpha-D-glucosamine contacts are provided by residues 11-13, asparagine 120, arginine 161, serine 188, and glutamine 282; that span reads TGG.

It belongs to the glycosyltransferase 28 family. MurG subfamily.

It is found in the cell inner membrane. It carries out the reaction di-trans,octa-cis-undecaprenyl diphospho-N-acetyl-alpha-D-muramoyl-L-alanyl-D-glutamyl-meso-2,6-diaminopimeloyl-D-alanyl-D-alanine + UDP-N-acetyl-alpha-D-glucosamine = di-trans,octa-cis-undecaprenyl diphospho-[N-acetyl-alpha-D-glucosaminyl-(1-&gt;4)]-N-acetyl-alpha-D-muramoyl-L-alanyl-D-glutamyl-meso-2,6-diaminopimeloyl-D-alanyl-D-alanine + UDP + H(+). The protein operates within cell wall biogenesis; peptidoglycan biosynthesis. Functionally, cell wall formation. Catalyzes the transfer of a GlcNAc subunit on undecaprenyl-pyrophosphoryl-MurNAc-pentapeptide (lipid intermediate I) to form undecaprenyl-pyrophosphoryl-MurNAc-(pentapeptide)GlcNAc (lipid intermediate II). This is UDP-N-acetylglucosamine--N-acetylmuramyl-(pentapeptide) pyrophosphoryl-undecaprenol N-acetylglucosamine transferase from Synechococcus sp. (strain CC9311).